The following is a 314-amino-acid chain: Epithelial cell adhesion molecule (314 aa).

A signal peptide spans 1–23; it reads MAPPQVLAFGLLLAAATATFAAA. Residues 24-265 are Extracellular-facing; the sequence is QEECVCENYK…APEFSMQGLK (242 aa). 6 cysteine pairs are disulfide-bonded: C27–C46, C29–C59, C38–C48, C66–C99, C110–C116, and C118–C135. Positions 63–135 constitute a Thyroglobulin type-1 domain; that stretch reads AAKCLVMKAE…RTDKDTEITC (73 aa). N-linked (GlcNAc...) asparagine; partial glycosylation is present at N74. The N-linked (GlcNAc...) asparagine glycan is linked to N111. An N-linked (GlcNAc...) asparagine glycan is attached at N198. Residues 266-288 traverse the membrane as a helical segment; it reads AGVIAVIVVVVIAVVAGIVVLVI. Residues 289–314 lie on the Cytoplasmic side of the membrane; the sequence is SRKKRMAKYEKAEIKEMGEMHRELNA.

It belongs to the EPCAM family. As to quaternary structure, monomer. Interacts with phosphorylated CLDN7. In terms of processing, hyperglycosylated in carcinoma tissue as compared with autologous normal epithelia. Glycosylation at Asn-198 is crucial for protein stability. In terms of tissue distribution, highly and selectively expressed by undifferentiated rather than differentiated embryonic stem cells (ESC). Levels rapidly diminish as soon as ESC's differentiate (at protein levels). Expressed in almost all epithelial cell membranes but not on mesodermal or neural cell membranes. Found on the surface of adenocarcinoma.

The protein localises to the lateral cell membrane. Its subcellular location is the cell junction. It is found in the tight junction. Its function is as follows. May act as a physical homophilic interaction molecule between intestinal epithelial cells (IECs) and intraepithelial lymphocytes (IELs) at the mucosal epithelium for providing immunological barrier as a first line of defense against mucosal infection. Plays a role in embryonic stem cells proliferation and differentiation. Up-regulates the expression of FABP5, MYC and cyclins A and E. This chain is Epithelial cell adhesion molecule (EPCAM), found in Homo sapiens (Human).